We begin with the raw amino-acid sequence, 215 residues long: 7-methyl-GTP pyrophosphatase (215 aa).

The active-site Proton acceptor is aspartate 79.

Belongs to the Maf family. YceF subfamily. A divalent metal cation is required as a cofactor.

The protein resides in the cytoplasm. The catalysed reaction is N(7)-methyl-GTP + H2O = N(7)-methyl-GMP + diphosphate + H(+). Its function is as follows. Nucleoside triphosphate pyrophosphatase that hydrolyzes 7-methyl-GTP (m(7)GTP). May have a dual role in cell division arrest and in preventing the incorporation of modified nucleotides into cellular nucleic acids. The sequence is that of 7-methyl-GTP pyrophosphatase from Burkholderia thailandensis (strain ATCC 700388 / DSM 13276 / CCUG 48851 / CIP 106301 / E264).